The following is a 297-amino-acid chain: MDFLINKKLKIFITLMETGSFSIATSVLYITRTPLSRVISDLERELKQRLFIRKNGTLIPTEFAQTIYRKVKSHYIFLHALEQEIGPTGKTKQLEIIFDEIYPGSLKNLIISALTISGQKTNIMGRAVNSQIIEELCQTNNCIVISARNYFHRESLVCRTSVEGGVMLFIPKKFFLCGKPDINRLAGTPVLFHEGAKNFNLDTIYHFFEQTLGITNPAFSFDNVDLFSSLYRLQQGLAMLLIPVRVCRALGLSTDHALHIKGVALCTSLYYPTKKRETPDYRKAIKLIQQELKQSTF.

The HTH lysR-type domain occupies 1–61; that stretch reads MDFLINKKLK…IRKNGTLIPT (61 aa). Residues 21–40 constitute a DNA-binding region (H-T-H motif); it reads FSIATSVLYITRTPLSRVIS.

It belongs to the LysR transcriptional regulatory family.

It is found in the cytoplasm. Functionally, positive regulator for the plasmid-encoded virulence factors SpvA, SpvB, and SpvC. The protein is Virulence genes transcriptional activator (mkaC) of Salmonella typhimurium (strain LT2 / SGSC1412 / ATCC 700720).